Consider the following 376-residue polypeptide: Thymidine kinase (376 aa).

A disordered region spans residues 1 to 47 (MASHAGQQHAPAFGQAARASGPTDGRAASRPSHRQGASEARGDPELP). Residue 56-63 (GPHGVGKT) participates in ATP binding. The active-site Proton acceptor is the E84. Residues Y102 and Q126 each contribute to the substrate site. R217 contacts ATP. R223 lines the substrate pocket.

The protein belongs to the herpesviridae thymidine kinase family. In terms of assembly, homodimer.

It catalyses the reaction thymidine + ATP = dTMP + ADP + H(+). Its function is as follows. Catalyzes the transfer of the gamma-phospho group of ATP to thymidine to generate dTMP in the salvage pathway of pyrimidine synthesis. The dTMP serves as a substrate for DNA polymerase during viral DNA replication. Allows the virus to be reactivated and to grow in non-proliferative cells lacking a high concentration of phosphorylated nucleic acid precursors. This Human herpesvirus 2 (strain 333) (HHV-2) protein is Thymidine kinase.